Reading from the N-terminus, the 305-residue chain is tRNA pseudouridine synthase B (305 aa).

D48 functions as the Nucleophile in the catalytic mechanism.

Belongs to the pseudouridine synthase TruB family. Type 1 subfamily.

The enzyme catalyses uridine(55) in tRNA = pseudouridine(55) in tRNA. In terms of biological role, responsible for synthesis of pseudouridine from uracil-55 in the psi GC loop of transfer RNAs. In Pseudomonas putida (strain ATCC 700007 / DSM 6899 / JCM 31910 / BCRC 17059 / LMG 24140 / F1), this protein is tRNA pseudouridine synthase B.